A 480-amino-acid chain; its full sequence is Sialyltransferase-like protein 5 (480 aa).

Residues 1-17 (MARAPPPLSSLPPPPRR) lie on the Cytoplasmic side of the membrane. The signal-anchor for type II membrane protein transmembrane segment at 18–38 (PTVVLLLGLALAFCLAVLSIQ) threads the bilayer. Topologically, residues 39-480 (SSFFTAPRLA…VCVRHERSSS (442 aa)) are lumenal. Residues N98, N130, N165, and N321 are each glycosylated (N-linked (GlcNAc...) asparagine).

It belongs to the glycosyltransferase 29 family.

The protein resides in the golgi apparatus membrane. Its function is as follows. May possess sialyltransferase-like activity in vitro. The polypeptide is Sialyltransferase-like protein 5 (Oryza sativa subsp. japonica (Rice)).